The sequence spans 610 residues: 6(G)-fructosyltransferase (610 aa).

Topologically, residues 1–20 (MATSLQAPILGSRPPRRTLR) are cytoplasmic. The helical; Signal-anchor for type II membrane protein transmembrane segment at 21–38 (FLSFALFSALVLVVASFS) threads the bilayer. The Vacuolar segment spans residues 39 to 610 (SRKSESGSGL…NQYYPFTSSN (572 aa)). Residues 79 to 82 (YMND), Gln98, Trp106, 141 to 142 (WT), and 207 to 208 (RD) each bind substrate. Residue Asp82 is part of the active site. N-linked (GlcNAc...) asparagine glycosylation is found at Asn215, Asn229, and Asn248. Residue Glu266 participates in substrate binding. A glycan (N-linked (GlcNAc...) asparagine) is linked at Asn459. A disulfide bridge links Cys460 with Cys508. Asn580 and Asn597 each carry an N-linked (GlcNAc...) asparagine glycan.

It belongs to the glycosyl hydrolase 32 family. Post-translationally, might be processed in two N-terminal and C-terminal proteolytic fragments.

The protein localises to the vacuole membrane. The catalysed reaction is [1-beta-D-fructofuranosyl-(2-&gt;1)-]m+1 alpha-D-glucopyranoside + [1-beta-D-fructofuranosyl-(2-&gt;1)-]n+1 alpha-D-glucopyranoside = [1-beta-D-fructofuranosyl-(2-&gt;1)-]m alpha-D-glucopyranoside + [1-beta-D-fructofuranosyl-(2-&gt;1)-]n+1 beta-D-fructofuranosyl-(2-&gt;6)-alpha-D-glucopyranoside (m &gt; 0, n &gt;= 0).. Functionally, involved in the synthesis of fructan of the inulin neoseries. Has no 1-FFT activity. The sequence is that of 6(G)-fructosyltransferase (FT1) from Asparagus officinalis (Garden asparagus).